We begin with the raw amino-acid sequence, 791 residues long: Disintegrin and metalloproteinase domain-containing protein 1a (791 aa).

An N-terminal signal peptide occupies residues 1 to 65 (MSVAAAGRGF…LLIFLPSTFC (65 aa)). N-linked (GlcNAc...) asparagine glycosylation is present at N72. Residues 201–220 (CSVTPKDSPGDTSHPPRSRK) are disordered. One can recognise a Peptidase M12B domain in the interval 235 to 429 (KYVEMFVVVN…HRGACLLDEP (195 aa)). An N-linked (GlcNAc...) asparagine glycan is attached at N256. Cystine bridges form between C345-C424, C385-C408, and C387-C393. H370 contacts Zn(2+). E371 is an active-site residue. Zn(2+)-binding residues include H374 and H380. N-linked (GlcNAc...) asparagine glycosylation is found at N407 and N484. The 85-residue stretch at 438 to 522 (AANCGNGVVE…ECPANSYMQD (85 aa)) folds into the Disintegrin domain. A disulfide bridge connects residues C494 and C514. A glycan (N-linked (GlcNAc...) asparagine) is linked at N630. In terms of domain architecture, EGF-like spans 663–697 (LQYNCEPQEMCHGNGVCNNFKHCHCDAGFAPPDCS). 3 disulfide bridges follow: C667-C679, C673-C685, and C687-C696. A helical membrane pass occupies residues 741–761 (VMVLVVPIFLVVLLCCLMLIA). Residues 762–791 (YLWSEVQEVVSPPSSSESSSSSSWSDSDSQ) are Cytoplasmic-facing. The tract at residues 772 to 791 (SPPSSSESSSSSSWSDSDSQ) is disordered.

As to quaternary structure, heterodimer with ADAM2/fertilin subunit beta. In terms of tissue distribution, testis.

Its subcellular location is the membrane. Functionally, may be involved in sperm-egg fusion. This is Disintegrin and metalloproteinase domain-containing protein 1a (Adam1a) from Mus musculus (Mouse).